The sequence spans 531 residues: MAGLQRLASHLPVGVMLPHNTTEAPGPHSAKQDSYEQSDSSQQSLKGHLRNNFQKQLLSNKELTLDKVHTHPKWNTKARSYSYPHCTGISHQDAGSDFQGQGNGLFYSSGPQSWYPKANNQDFIPFTKKRVGVDRAYPLKPVVHRKSCSTGESGTDGDQNVYPRPPELREFSSRNFDVRNQVNFSVVDPVLAAMQAEKALANLDRMEWVQIRRLEAAGESLEEEIRRKQILLRGKLKKTEEELRRIQTQKEQAKENENRELQKIIFPRSRVKGNNSNTTHKAVFSPEFDFEEEFSRDKREDETWERSQQNSSPFQLSDYRIQRLKRERLVASNNKIRDRVSEPSMEKFSPPSETPGGALQGSARNSSLSMAPDSSGSSGSTEEPQLGECSHCGRKFLLFRLERHSNICSRMQGSKRKVFDSSRARAKGTELEQYLNWKGPASAKAEPPRKNNWRQKHESFIHTLRQAREVQQVTAKGENRSHLPPILPAENPDYIQCPHCSHHFAPKVAEQHIPKCKTIKNRPPPPRKHYS.

Positions 16–45 are disordered; sequence MLPHNTTEAPGPHSAKQDSYEQSDSSQQSL. Positions 35 to 44 are enriched in low complexity; that stretch reads YEQSDSSQQS. A coiled-coil region spans residues 209 to 264; the sequence is VQIRRLEAAGESLEEEIRRKQILLRGKLKKTEEELRRIQTQKEQAKENENRELQKI. Disordered stretches follow at residues 290–318 and 334–387; these read FEEEFSRDKREDETWERSQQNSSPFQLSD and NKIR…PQLG. Over residues 293–305 the composition is skewed to basic and acidic residues; sequence EFSRDKREDETWE. Over residues 306–315 the composition is skewed to polar residues; the sequence is RSQQNSSPFQ. Residues 335-345 show a composition bias toward basic and acidic residues; it reads KIRDRVSEPSM. The span at 366-380 shows a compositional bias: low complexity; it reads SSLSMAPDSSGSSGS. 2 C2HC/C3H-type zinc fingers span residues 385–414 and 493–522; these read QLGECSHCGRKFLLFRLERHSNICSRMQGS and DYIQCPHCSHHFAPKVAEQHIPKCKTIKNR. The Zn(2+) site is built by Cys389, Cys392, His404, Cys408, Cys497, Cys500, His512, and Cys516.

This sequence belongs to the ZC2HC1 family. The cofactor is Zn(2+).

This Macaca fascicularis (Crab-eating macaque) protein is Zinc finger C2HC domain-containing protein 1C (ZC2HC1C).